Consider the following 390-residue polypeptide: Spore development regulator vosA (390 aa).

Residues 3 to 132 form the Velvet domain; the sequence is NNTSSDFDLI…ADQGVKLRIR (130 aa). Over residues 137–149 the composition is skewed to basic and acidic residues; it reads TMLKRSTRPDEFH. Disordered stretches follow at residues 137–191 and 265–390; these read TMLK…PVKR and QASA…GTPQ. The segment covering 165–175 has biased composition (low complexity); the sequence is PPSSSYGGYPP. The Nuclear localization signal signature appears at 273–280; it reads IPDPTGQS. 2 stretches are compositionally biased toward polar residues: residues 350–364 and 371–390; these read QTPQ…SQMV and SSVT…GTPQ.

Belongs to the velvet family. VosA subfamily. As to quaternary structure, forms a heterodimeric complex with velB; the formation of the velB-vosA complex is light-dependent. Interacts with velA, velB and velC.

The protein localises to the nucleus. Component of the velB-VosA heterodimeric complex that plays a dual role in activating genes associated with spore maturation and repressing certain development-associated genes. The complex binds DNA through the DNA-binding domain of vosA that recognizes an 11-nucleotide consensus sequence 5'-CTGGCCGCGGC-3' consisting of two motifs in the promoters of key developmental regulatory genes. The chain is Spore development regulator vosA from Penicillium rubens (strain ATCC 28089 / DSM 1075 / NRRL 1951 / Wisconsin 54-1255) (Penicillium chrysogenum).